The following is a 925-amino-acid chain: Collagen alpha-2(I) chain (925 aa).

The tract at residues 1 to 925 is disordered; sequence SGGFDFSFLP…FGYEGDFYRA (925 aa). 2 positions are modified to 4-hydroxyproline: Pro-10 and Pro-13. The span at 22–34 shows a compositional bias: gly residues; it reads RYYGVGLGPGPMG. Positions 35 to 74 are enriched in low complexity; the sequence is LMGPRGPPGASGAPGPQGFQGPAGEPGEPGQTGPAGARGP. Pro-42 and Pro-48 each carry 4-hydroxyproline. Lys-103 carries the 5-hydroxylysine; alternate modification. Lys-103 carries an O-linked (Gal...) hydroxylysine; alternate glycan. The segment covering 154–171 has biased composition (low complexity); the sequence is DGSVGPVGPAGPIGSAGP. The span at 271–280 shows a compositional bias: gly residues; that stretch reads GESGGKGEPG. A compositionally biased stretch (low complexity) spans 281–291; it reads SAGPQGPPGSS. Over residues 306-315 the composition is skewed to gly residues; the sequence is GLRGGPGSRG. 3 positions are modified to 4-hydroxyproline: Pro-317, Pro-332, and Pro-335. Residues 363–379 show a composition bias toward low complexity; sequence IDGRPGPIGPAGARGEA. Residues 423–432 show a composition bias toward gly residues; that stretch reads GVQGGKGEQG. Low complexity-rich tracts occupy residues 479–496 and 508–518; these read PGES…SRGP and EPGVVGAPGTA. Residues 519-528 are compositionally biased toward gly residues; that stretch reads GPAGSGGLPG. 2 stretches are compositionally biased toward low complexity: residues 551 to 595 and 602 to 622; these read VGTT…PRGS and VGPA…QPGA. A compositionally biased stretch (basic and acidic residues) spans 623-632; that stretch reads KGERGTKGPK. Low complexity predominate over residues 640–650; it reads PTGPVGSAGPA. Gly residues predominate over residues 660–669; sequence GSRGDGGPPG. Positions 671–680 are enriched in low complexity; it reads TGFPGAAGRT. A compositionally biased stretch (gly residues) spans 696 to 718; it reads GAAGKGDQGPVGRGETGAGGPPG. Low complexity-rich tracts occupy residues 719–753 and 761–771; these read FTGE…LGLP and LPGVAGAVGEP. A compositionally biased stretch (gly residues) spans 772–782; sequence GPLGIGPPGAR. Residues 791–806 show a composition bias toward low complexity; it reads EPGPVGSVGPVGALGP. Basic and acidic residues predominate over residues 816-827; sequence RGDKGEPGEKGP. Positions 897–907 are enriched in pro residues; sequence PAGPPGPPGPP.

It belongs to the fibrillar collagen family. Trimers of one alpha 2(I) and two alpha 1(I) chains. Interacts (via C-terminus) with TMEM131 (via PapD-L domain); the interaction is direct and is involved in assembly and TRAPPIII ER-to-Golgi transport complex-dependent secretion of collagen. Post-translationally, prolines at the third position of the tripeptide repeating unit (G-X-Y) are hydroxylated in some or all of the chains. As to expression, expressed in bones.

The protein resides in the secreted. It localises to the extracellular space. Its subcellular location is the extracellular matrix. In terms of biological role, type I collagen is a member of group I collagen (fibrillar forming collagen). The protein is Collagen alpha-2(I) chain of Acratocnus sp. (strain SLP-2019) (Ground sloth).